We begin with the raw amino-acid sequence, 91 residues long: Late embryogenis abundant protein 2 (91 aa).

The segment at 47–72 (KRAGEASSEKAPWVPDPKTGYYRPET) is disordered.

It belongs to the LEA type 3 family.

The protein resides in the cytoplasm. Its subcellular location is the nucleus. This chain is Late embryogenis abundant protein 2, found in Arabidopsis thaliana (Mouse-ear cress).